The sequence spans 381 residues: Succinyl-diaminopimelate desuccinylase (381 aa).

His68 contacts Zn(2+). The active site involves Asp70. Zn(2+) is bound at residue Asp101. Glu135 functions as the Proton acceptor in the catalytic mechanism. Zn(2+) contacts are provided by Glu136, Glu164, and His350.

This sequence belongs to the peptidase M20A family. DapE subfamily. In terms of assembly, homodimer. It depends on Zn(2+) as a cofactor. The cofactor is Co(2+).

The catalysed reaction is N-succinyl-(2S,6S)-2,6-diaminopimelate + H2O = (2S,6S)-2,6-diaminopimelate + succinate. It participates in amino-acid biosynthesis; L-lysine biosynthesis via DAP pathway; LL-2,6-diaminopimelate from (S)-tetrahydrodipicolinate (succinylase route): step 3/3. Functionally, catalyzes the hydrolysis of N-succinyl-L,L-diaminopimelic acid (SDAP), forming succinate and LL-2,6-diaminopimelate (DAP), an intermediate involved in the bacterial biosynthesis of lysine and meso-diaminopimelic acid, an essential component of bacterial cell walls. The sequence is that of Succinyl-diaminopimelate desuccinylase from Neisseria gonorrhoeae (strain ATCC 700825 / FA 1090).